The following is a 309-amino-acid chain: Glycine-rich RNA-binding protein 3, mitochondrial (309 aa).

Residues 1–37 constitute a mitochondrion transit peptide; sequence MAFLSKFGNILKQTTNKQLNAQVSLSSPSLFQAIRCM. The 79-residue stretch at 40-118 folds into the RRM domain; that stretch reads SKLFIGGMAY…RVVKVNYAND (79 aa). Residues 247–309 form a disordered region; it reads FAGDSQFGGS…GEFEDVAKRA (63 aa). Residues 258–273 are compositionally biased toward polar residues; that stretch reads VGNSSQFGGDNTQFTA.

This sequence belongs to the GR-RBP family. As to quaternary structure, homodimer. Interacts with ORRM2 and MORF8/RIP1. Interacts with RBG5/ORRM4. Binds to RBG2/ORRM5.

The protein resides in the mitochondrion. Possibly has a role in RNA transcription or processing during stress. Involved in C-to-U editing of mitochondrial RNA. Functions as a minor mitochondrial editing factor. Controls 6 percent of the mitochondrial editing sites. The sequence is that of Glycine-rich RNA-binding protein 3, mitochondrial from Arabidopsis thaliana (Mouse-ear cress).